The chain runs to 203 residues: Endo-type membrane-bound lytic murein transglycosylase A (203 aa).

The N-terminal stretch at 1 to 15 (MKLRWFAFLIVLLAG) is a signal peptide. Cysteine 16 carries the N-palmitoyl cysteine lipid modification. Cysteine 16 carries the S-diacylglycerol cysteine lipid modification.

This sequence belongs to the transglycosylase Slt family.

The protein localises to the cell outer membrane. It catalyses the reaction Endolytic cleavage of the (1-&gt;4)-beta-glycosidic linkage between N-acetylmuramic acid (MurNAc) and N-acetylglucosamine (GlcNAc) residues in peptidoglycan with concomitant formation of a 1,6-anhydrobond in the MurNAc residue.. Functionally, murein-degrading enzyme. May play a role in recycling of muropeptides during cell elongation and/or cell division. Preferentially cleaves at a distance of more than two disaccharide units from the ends of the glycan chain. The sequence is that of Endo-type membrane-bound lytic murein transglycosylase A from Escherichia coli (strain K12 / MC4100 / BW2952).